Here is a 385-residue protein sequence, read N- to C-terminus: Citrate synthase (385 aa).

Residues H223, H263, and D318 contribute to the active site.

This sequence belongs to the citrate synthase family. Homodimer.

The enzyme catalyses oxaloacetate + acetyl-CoA + H2O = citrate + CoA + H(+). It participates in carbohydrate metabolism; tricarboxylic acid cycle; isocitrate from oxaloacetate: step 1/2. With respect to regulation, allosterically inhibited by NADH. This chain is Citrate synthase (gltA), found in Thermoplasma acidophilum (strain ATCC 25905 / DSM 1728 / JCM 9062 / NBRC 15155 / AMRC-C165).